The primary structure comprises 96 residues: Large ribosomal subunit protein eL43 (96 aa).

A C4-type zinc finger spans residues 39–60; sequence CTFCGKTATKRTCVGIWKCKKC.

The protein belongs to the eukaryotic ribosomal protein eL43 family. As to quaternary structure, component of the large ribosomal subunit. Mature ribosomes consist of a small (40S) and a large (60S) subunit. The 40S subunit contains about 32 different proteins and 1 molecule of RNA (18S). The 60S subunit contains about 42 different proteins and 3 molecules of RNA (28S, 5.8S and 5S).

The protein localises to the cytoplasm. In terms of biological role, component of the ribosome, a large ribonucleoprotein complex responsible for the synthesis of proteins in the cell. The small ribosomal subunit (SSU) binds messenger RNAs (mRNAs) and translates the encoded message by selecting cognate aminoacyl-transfer RNA (tRNA) molecules. The large subunit (LSU) contains the ribosomal catalytic site termed the peptidyl transferase center (PTC), which catalyzes the formation of peptide bonds, thereby polymerizing the amino acids delivered by tRNAs into a polypeptide chain. The nascent polypeptides leave the ribosome through a tunnel in the LSU and interact with protein factors that function in enzymatic processing, targeting, and the membrane insertion of nascent chains at the exit of the ribosomal tunnel. The chain is Large ribosomal subunit protein eL43 from Plasmodium falciparum (isolate 3D7).